We begin with the raw amino-acid sequence, 839 residues long: Toll-like receptor 4 (839 aa).

Residues 1–23 (MMSASRLAGTLIPAMAFLSCVRP) form the signal peptide. The Extracellular portion of the chain corresponds to 24 to 631 (ESWEPCVEVV…SLNITCQMNK (608 aa)). The cysteines at positions 29 and 40 are disulfide-linked. A glycan (N-linked (GlcNAc...) asparagine) is linked at N35. LRR repeat units lie at residues 55-76 (STKNLDLSFNPLRHLGSYSFFS), 79-100 (ELQVLDLSRCEIQTIEDGAYQS), 103-124 (HLSTLILTGNPIQSLALGAFSG), 127-148 (SLQKLVAVETNLASLENFPIGH), and 151-172 (TLKELNVAHNLIQSFKLPEYFS). N173 carries N-linked (GlcNAc...) asparagine glycosylation. LRR repeat units lie at residues 176-199 (NLEHLDLSSNKIQSIYCTDLRVLH), 205-225 (NLSLDLSLNPMNFIQPGAFKE), and 227-247 (RLHKLTLRNNFDSLNVMKTCI). A glycan (N-linked (GlcNAc...) asparagine) is linked at N205. The cysteines at positions 281 and 306 are disulfide-linked. N282 and N309 each carry an N-linked (GlcNAc...) asparagine glycan. 10 LRR repeats span residues 331–351 (GWQHLELVNCKFGQFPTLKLK), 352–373 (SLKRLTFTSNKGGNAFSEVDLP), 374–394 (SLEFLDLSRNGLSFKGCCSQS), 400–422 (SLKYLDLSFNGVITMSSNFLGLE), 423–444 (QLEHLDFQHSNLKQMSEFSVFL), 448–456 (NLIYLDISH), 472–495 (SLEVLKMAGNSFQENFLPDIFTEL), 497–518 (NLTFLDLSQCQLEQLSPTAFNS), 521–542 (SLQVLNMSHNNFFSLDTFPYKC), and 545–565 (SLQVLDYSLNHIMTSKKQELQ). C390 and C391 are disulfide-bonded. N-linked (GlcNAc...) asparagine glycans are attached at residues N497 and N526. N575 carries N-linked (GlcNAc...) asparagine glycosylation. One can recognise an LRRCT domain in the interval 579–629 (NDFACTCEHQSFLQWIKDQRQLLVEVERMECATPSDKQGMPVLSLNITCQM). 2 disulfides stabilise this stretch: C583-C609 and C585-C627. N-linked (GlcNAc...) asparagine glycans are attached at residues N624 and N630. A helical membrane pass occupies residues 632 to 652 (TIIGVSVLSVLVVSVVAVLVY). Over 653–839 (KFYFHLMLLA…GCNWQEATSI (187 aa)) the chain is Cytoplasmic. Positions 672 to 815 (NIYDAFVIYS…IFWRRLRKAL (144 aa)) constitute a TIR domain.

Belongs to the Toll-like receptor family. In terms of assembly, belongs to the lipopolysaccharide (LPS) receptor, a multi-protein complex containing at least CD14, LY96 and TLR4. Binding to bacterial LPS leads to homodimerization. Interacts with LY96 via the extracellular domain. Interacts with MYD88. Interacts (via TIR domains) with TIRAP. Interacts with TICAM2. Interacts with NOX4. Interacts with CNPY3. Interacts with HSP90B1. The interaction with both CNPY3 and HSP90B1 is required for proper folding in the endoplasmic reticulum. Interacts with MAP3K21; this interaction leads to negative regulation of TLR4 signaling. Interacts with CD36, following CD36 stimulation by oxLDL or amyloid-beta 42, and forms a heterodimer with TLR6. The trimeric complex is internalized and triggers inflammatory response. LYN kinase activity facilitates TLR4-TLR6 heterodimerization and signal initiation. Interacts with TICAM1 in response to LPS in a WDFY1-dependent manner. Interacts with WDFY1 in response to LPS. Interacts with SMPDL3B. Interacts with CEACAM1; upon lipopolysaccharide stimulation, forms a complex including TLR4 and the phosphorylated form of SYK and CEACAM1, which in turn, recruits PTPN6 that dephosphorylates SYK, reducing the production of reactive oxygen species (ROS) and lysosome disruption, which in turn, reduces the activity of the inflammasome. Interacts with RFTN1; the interaction occurs in response to lipopolysaccharide stimulation. Interacts with SCIMP; the interaction occurs in response to lipopolysaccharide stimulation and is enhanced by phosphorylation of SCIMP by LYN. This interaction facilitates the phosphorylation of TLR4 by LYN which elicits a selective cytokine response in macrophages. Interacts with TRAF3IP3. Interacts with TREM1; this interaction enhances TLR4-mediated inflammatory response. Interacts with ZG16B/PAUF. Interacts with CD82; this interaction inhibits TLR4-mediated signaling pathway. Interacts with neutrophil recruitment protein from Aedes aegypti saliva; the interaction probably promotes activation of canonical NF-kappa-B signaling in skin-resident macrophages and subsequent expression of neutrophil chemoattractants. As to quaternary structure, (Microbial infection) In case of infection, interacts with uropathogenic E.coli protein TcpC. (Microbial infection) In case of infection, interacts with B.melitensis protein TcpB; TcpB abolishes the TLR4-TIRAP interaction in vitro. In terms of assembly, (Microbial infection) Interacts with ebolavirus protein GP; this interaction leads to the production of proinflammatory cytokines and suppressor of cytokine signaling 1/SOCS1. In terms of processing, N-Glycosylation of Asn-526 and Asn-575 by STT3A-containing OST-A complex is necessary for the expression of TLR4 on the cell surface and the LPS-response. Likewise, mutants lacking two or more of the other N-glycosylation sites were deficient in interaction with LPS. Post-translationally, phosphorylated on tyrosine residues by LYN after binding lipopolysaccharide. Ubiquitinated by RNF128 via 'Lys-28'-linked polyubiquitin chains, leading to proteasomal degradation. Highly expressed in placenta, spleen and peripheral blood leukocytes. Detected in monocytes, macrophages, dendritic cells and several types of T-cells. Expressed in pancreatic cancer cells but not in normal pancreatic cells (at protein level).

Its subcellular location is the cell membrane. It is found in the early endosome. The protein resides in the cell projection. The protein localises to the ruffle. Functionally, transmembrane receptor that functions as a pattern recognition receptor recognizing pathogen- and damage-associated molecular patterns (PAMPs and DAMPs) to induce innate immune responses via downstream signaling pathways. At the plasma membrane, cooperates with LY96 to mediate the innate immune response to bacterial lipopolysaccharide (LPS). Also involved in LPS-independent inflammatory responses triggered by free fatty acids, such as palmitate, and Ni(2+). Mechanistically, acts via MYD88, TIRAP and TRAF6, leading to NF-kappa-B activation, cytokine secretion and the inflammatory response. Alternatively, CD14-mediated TLR4 internalization via endocytosis is associated with the initiation of a MYD88-independent signaling via the TICAM1-TBK1-IRF3 axis leading to type I interferon production. In addition to the secretion of proinflammatory cytokines, initiates the activation of NLRP3 inflammasome and formation of a positive feedback loop between autophagy and NF-kappa-B signaling cascade. In complex with TLR6, promotes inflammation in monocytes/macrophages by associating with TLR6 and the receptor CD86. Upon ligand binding, such as oxLDL or amyloid-beta 42, the TLR4:TLR6 complex is internalized and triggers inflammatory response, leading to NF-kappa-B-dependent production of CXCL1, CXCL2 and CCL9 cytokines, via MYD88 signaling pathway, and CCL5 cytokine, via TICAM1 signaling pathway. In myeloid dendritic cells, vesicular stomatitis virus glycoprotein G but not LPS promotes the activation of IRF7, leading to type I IFN production in a CD14-dependent manner. Required for the migration-promoting effects of ZG16B/PAUF on pancreatic cancer cells. This is Toll-like receptor 4 (TLR4) from Homo sapiens (Human).